Consider the following 95-residue polypeptide: DNA-directed RNA polymerase subunit omega (95 aa).

The protein belongs to the RNA polymerase subunit omega family. In terms of assembly, the RNAP catalytic core consists of 2 alpha, 1 beta, 1 beta' and 1 omega subunit. When a sigma factor is associated with the core the holoenzyme is formed, which can initiate transcription.

The enzyme catalyses RNA(n) + a ribonucleoside 5'-triphosphate = RNA(n+1) + diphosphate. Promotes RNA polymerase assembly. Latches the N- and C-terminal regions of the beta' subunit thereby facilitating its interaction with the beta and alpha subunits. The chain is DNA-directed RNA polymerase subunit omega from Colwellia psychrerythraea (strain 34H / ATCC BAA-681) (Vibrio psychroerythus).